A 92-amino-acid chain; its full sequence is Large ribosomal subunit protein eL43 (92 aa).

The Zn(2+) site is built by Cys39, Cys42, Cys57, and Cys60. The C4-type zinc-finger motif lies at 39–60; sequence CSFCGKTKMKRRAVGIWHCGSC.

Belongs to the eukaryotic ribosomal protein eL43 family. As to quaternary structure, component of the large ribosomal subunit.

It localises to the cytoplasm. Functionally, component of the large ribosomal subunit. The ribosome is a large ribonucleoprotein complex responsible for the synthesis of proteins in the cell. The polypeptide is Large ribosomal subunit protein eL43 (rpl37a) (Ictalurus punctatus (Channel catfish)).